The following is a 130-amino-acid chain: Large ribosomal subunit protein bL20 (130 aa).

The protein belongs to the bacterial ribosomal protein bL20 family.

Functionally, binds directly to 23S ribosomal RNA and is necessary for the in vitro assembly process of the 50S ribosomal subunit. It is not involved in the protein synthesizing functions of that subunit. This chain is Large ribosomal subunit protein bL20, found in Nocardioides sp. (strain ATCC BAA-499 / JS614).